The following is a 5141-amino-acid chain: SCO-spondin (5141 aa).

An N-terminal signal peptide occupies residues 1 to 17; sequence MLLPALLFGMLWAPANG. The EMI domain occupies 18-102; sequence HWCEQIETVH…ACCPGWGGIH (85 aa). 4 N-linked (GlcNAc...) asparagine glycosylation sites follow: Asn88, Asn130, Asn150, and Asn167. Positions 193 to 364 constitute a VWFD 1 domain; sequence ATCATWSGFH…RLPGYEPGCL (172 aa). Cystine bridges form between Cys195–Cys325, Cys217–Cys363, and Cys239–Cys245. The TIL 1 domain maps to 472-527; it reads CPGGQLYSDCISSCPPSCSAVAQGEEGSCGKECVSGCECPTGLFWDGALCVPAAHC. The VWFD 2 domain occupies 565-738; the sequence is AECAVGGDGH…FQVSGDGRCP (174 aa). Cystine bridges form between Cys567–Cys700 and Cys591–Cys737. 2 N-linked (GlcNAc...) asparagine glycosylation sites follow: Asn657 and Asn822. The TIL 2 domain maps to 830–883; the sequence is CPGGQVYQECAPACGHYCGEPEDCKELGSCVAGCNCPPGLLWDLEGQCVPPSMC. Asn895, Asn949, and Asn991 each carry an N-linked (GlcNAc...) asparagine glycan. The 171-residue stretch at 1017-1187 folds into the VWFD 3 domain; the sequence is GWCQASGAPH…HSWRLNPLCP (171 aa). Disulfide bonds link Cys1019–Cys1151, Cys1041–Cys1186, and Cys1062–Cys1069. Residues 1280 to 1336 form the TIL 3 domain; sequence CEGGQVYEPCGSTCPPTCHDHHPELRWHCQAITCVEGCFCPEGTLLHGGTCVELTDC. N-linked (GlcNAc...) asparagine glycosylation occurs at Asn1357. LDL-receptor class A domains follow at residues 1380 to 1417, 1420 to 1456, 1456 to 1492, and 1496 to 1534; these read GCAE…EGCD, VCGE…QGCL, LCPQ…ESCL, and SCTS…VHCS. 12 cysteine pairs are disulfide-bonded: Cys1381-Cys1394, Cys1388-Cys1407, Cys1401-Cys1416, Cys1421-Cys1433, Cys1428-Cys1446, Cys1440-Cys1455, Cys1457-Cys1469, Cys1464-Cys1482, Cys1476-Cys1491, Cys1497-Cys1509, Cys1504-Cys1522, and Cys1516-Cys1533. The interval 1533–1567 is disordered; sequence CSSPSLPTPPAGIGQNPSTSSPDTSPSPVGSASPA. Over residues 1549 to 1567 the composition is skewed to low complexity; that stretch reads PSTSSPDTSPSPVGSASPA. LDL-receptor class A domains are found at residues 1569-1605 and 1607-1646; these read PCSL…LDCG and PCKL…DVCE. Disulfide bonds link Cys1570-Cys1582, Cys1577-Cys1595, Cys1589-Cys1604, Cys1608-Cys1621, Cys1615-Cys1634, and Cys1628-Cys1645. 2 N-linked (GlcNAc...) asparagine glycosylation sites follow: Asn1655 and Asn1668. Residues 1660–1700 form the LDL-receptor class A 7 domain; sequence PCPEFSCPNGTCIDFLLVCDGSPDCELADETEPSLDEQGCG. 9 disulfides stabilise this stretch: Cys1661-Cys1671, Cys1666-Cys1684, Cys1678-Cys1699, Cys1711-Cys1747, Cys1715-Cys1752, Cys1726-Cys1737, Cys1767-Cys1964, Cys1771-Cys1969, and Cys1781-Cys1791. 2 TSP type-1 domains span residues 1699–1753 and 1755–1970; these read CGTW…EACP and DGEW…EPCE. N-linked (GlcNAc...) asparagine glycosylation occurs at Asn1725. N-linked (GlcNAc...) asparagine glycosylation is present at Asn1814. EGF-like domains lie at 1829–1868 and 1869–1895; these read CPLT…GRCV and RPRQ…CQLC. Positions 1970 to 2030 constitute a VWFC 1 domain; sequence EGCEQWGLTY…GMGESCCHCA (61 aa). N-linked (GlcNAc...) asparagine glycosylation is present at Asn2035. 4 disulfides stabilise this stretch: Cys2070–Cys2226, Cys2236–Cys2248, Cys2243–Cys2261, and Cys2255–Cys2270. Positions 2070-2226 constitute an F5/8 type C domain; sequence CYSPLGLAGL…IFLWVELLGC (157 aa). The tract at residues 2087-2109 is disordered; it reads PLEHSTRAAPVEAPTAGPGPRED. Residues Asn2130 and Asn2148 are each glycosylated (N-linked (GlcNAc...) asparagine). An LDL-receptor class A 8 domain is found at 2235–2271; that stretch reads LCPGTRHRCANGDCALKGGPCDGAVDCEDGSDEEGCG. The disordered stretch occupies residues 2262–2335; sequence EDGSDEEGCG…SPSASEGLLP (74 aa). Over residues 2276-2294 the composition is skewed to polar residues; that stretch reads STASRVHSTARTPALSPTQ. Basic and acidic residues predominate over residues 2301-2314; it reads HPREGLADMEHQQP. 2 consecutive LDL-receptor class A domains span residues 2391–2427 and 2448–2484; these read RCGP…QHCA and LCSP…DDCV. Intrachain disulfides connect Cys2392–Cys2404, Cys2399–Cys2417, Cys2411–Cys2426, Cys2449–Cys2461, Cys2456–Cys2474, Cys2468–Cys2483, Cys2486–Cys2522, Cys2497–Cys2501, Cys2532–Cys2537, Cys2552–Cys2589, Cys2556–Cys2594, and Cys2567–Cys2579. TSP type-1 domains follow at residues 2485–2538 and 2540–2595; these read DCVL…QACP and AGAW…QLCP. In terms of domain architecture, TIL 4 spans 2618 to 2660; it reads PPCPPSCLDPEANRSCSGHCVEGCRCPPGLFLQDSHCLPLSEC. Residues Asn2630 and Asn2679 are each glycosylated (N-linked (GlcNAc...) asparagine). TSP type-1 domains follow at residues 2700-2754, 2758-2813, and 2815-2868; these read SCGW…TDCG, PGWT…SLCP, and PSAW…HPCT. Cystine bridges form between Cys2701–Cys2739, Cys2712–Cys2716, Cys2749–Cys2753, Cys2769–Cys2807, Cys2773–Cys2812, Cys2789–Cys2797, Cys2827–Cys2862, Cys2831–Cys2867, and Cys2842–Cys2852. Asn2921 and Asn2951 each carry an N-linked (GlcNAc...) asparagine glycan. TSP type-1 domains follow at residues 2969–3024 and 3025–3068; these read ACGW…RPCQ and GPGA…QPCA. 3 disulfide bridges follow: Cys2970-Cys3008, Cys2981-Cys2985, and Cys3018-Cys3023. 4 N-linked (GlcNAc...) asparagine glycosylation sites follow: Asn3046, Asn3101, Asn3148, and Asn3158. One can recognise a TIL 5 domain in the interval 3075–3127; sequence CPKDQQWLDCAQGPASCAHLSTPREANQTCHPGCYCLSGMLLLNNVCVPAQDC. TSP type-1 domains follow at residues 3168 to 3235 and 3237 to 3292; these read QPAW…PGCN and AGVW…QPCP. 6 cysteine pairs are disulfide-bonded: Cys3180/Cys3229, Cys3184/Cys3234, Cys3195/Cys3219, Cys3249/Cys3286, Cys3253/Cys3291, and Cys3264/Cys3276. Residue Asn3295 is glycosylated (N-linked (GlcNAc...) asparagine). Residues 3300-3350 form the TIL 6 domain; it reads EGAEYSPCGPPCPRSCDDLVHCMWHCQPGCYCPPGKVLSADGAICVQPHHC. Asn3384 is a glycosylation site (N-linked (GlcNAc...) asparagine). 2 consecutive TSP type-1 domains span residues 3393–3455 and 3457–3512; these read SGDW…TACP and DGAW…TPCT. 6 cysteine pairs are disulfide-bonded: Cys3405-Cys3448, Cys3409-Cys3454, Cys3420-Cys3432, Cys3469-Cys3504, Cys3472-Cys3511, and Cys3482-Cys3494. N-linked (GlcNAc...) asparagine glycosylation is present at Asn3506. One can recognise a TIL 7 domain in the interval 3514–3570; sequence CGGGQDLLPCGQPCPHSCQDLSLGSTCQPGSSGCQSGCGCPPGQLSQDGLCVFPADC. Residues Asn3584 and Asn3611 are each glycosylated (N-linked (GlcNAc...) asparagine). One can recognise a TSP type-1 14 domain in the interval 3630–3678; sequence PGIWSSWGPWEKCSVPCGGGEQLRSRQCARPPCPGLAQQSRTCHIHVCR. Intrachain disulfides connect Cys3642-Cys3672, Cys3646-Cys3677, and Cys3657-Cys3662. Asn3787 carries N-linked (GlcNAc...) asparagine glycosylation. 4 TSP type-1 domains span residues 3806–3862, 3876–3928, 3942–3998, and 4000–4055; these read RGYF…PECP, AGGW…PSCT, NCFW…RACP, and PGGW…MPCE. 3 disulfide bridges follow: Cys3818/Cys3856, Cys3822/Cys3861, and Cys3834/Cys3846. N-linked (GlcNAc...) asparagine glycosylation occurs at Asn3910. Intrachain disulfides connect Cys3943-Cys3979, Cys3954-Cys3958, Cys3992-Cys3997, Cys4012-Cys4049, Cys4016-Cys4054, and Cys4027-Cys4039. The 56-residue stretch at 4058-4113 folds into the TIL 8 domain; sequence CPAGMEMVSCANRCPYSCSDLQEAVMCQEDQACQLGCRCSEGFLEQDGGCVPVGHC. An N-linked (GlcNAc...) asparagine glycan is attached at Asn4135. 4 consecutive TSP type-1 domains span residues 4155 to 4208, 4249 to 4304, 4306 to 4362, and 4364 to 4418; these read HCAW…DPCP, PGGW…QLCL, LLEI…GPCQ, and DCMW…GNCS. 6 cysteine pairs are disulfide-bonded: Cys4156–Cys4192, Cys4167–Cys4171, Cys4202–Cys4207, Cys4261–Cys4298, Cys4265–Cys4303, and Cys4276–Cys4288. A glycan (N-linked (GlcNAc...) asparagine) is linked at Asn4345. Intrachain disulfides connect Cys4365-Cys4402, Cys4376-Cys4378, and Cys4412-Cys4417. Asn4416 carries N-linked (GlcNAc...) asparagine glycosylation. The TIL 9 domain occupies 4422-4477; that stretch reads CLPPFEFQSCGSPCAGLCATHLSHQLCQDLPPCQPGCYCPMGLLEQDGGCILPEQC. The N-linked (GlcNAc...) asparagine glycan is linked to Asn4557. A TSP type-1 23 domain is found at 4608–4659; that stretch reads TCQWGPWGPWSPCQVPCSGGFKLRWREASDNSVGECRGPWAQTESCNMGSCP. Intrachain disulfides connect Cys4609–Cys4643, Cys4620–Cys4624, and Cys4653–Cys4658. In terms of domain architecture, TIL 10 spans 4673–4719; sequence DCANQCPRSCADLWEGVQCLQGPCSPGCRCPPGQLVQDGHCVPISSC. N-linked (GlcNAc...) asparagine glycosylation is found at Asn4727, Asn4744, and Asn4749. In terms of domain architecture, TSP type-1 24 spans 4759 to 4812; that stretch reads CPVLGPWSPWSECSAVCGGGTMVRYRSCEEHPDSAPCQALDMEQRVECNLQTCP. 3 cysteine pairs are disulfide-bonded: Cys4771/Cys4806, Cys4775/Cys4811, and Cys4786/Cys4795. The region spanning 4814–4868 is the TIL 11 domain; the sequence is CPPGQVLSTCATLCPSFCSHLWPGTICVREPCQLGCGCPGGQLLHSGTCIPPEAC. N-linked (GlcNAc...) asparagine glycosylation is found at Asn4899, Asn4942, and Asn4949. Residues 4920–4978 enclose the TIL 12 domain; that stretch reads CPPGEILQLGELRPCEKTCLEMNKTQAWSNCTEAQVPGCVCQLGHFRSHTGLCVPEDHC. The region spanning 4978–5036 is the VWFC 2 domain; it reads CECWHHGSPHLPGSEWQEACESCRCLHGKSVCTQHCPELSCAQGEVVVQEPGSCCPICQ. Disulfide bonds link Cys5047-Cys5095, Cys5061-Cys5112, Cys5071-Cys5128, and Cys5075-Cys5130. Positions 5047-5134 constitute a CTCK domain; it reads CRHLTELRNL…IHNCHCSACQ (88 aa). Residue Asn5055 is glycosylated (N-linked (GlcNAc...) asparagine).

Belongs to the thrombospondin family.

The protein localises to the secreted. The protein resides in the extracellular space. In terms of biological role, involved in the modulation of neuronal aggregation. May be involved in developmental events during the formation of the central nervous system. In Rattus norvegicus (Rat), this protein is SCO-spondin.